Here is a 463-residue protein sequence, read N- to C-terminus: NADH-quinone oxidoreductase subunit N (463 aa).

A run of 14 helical transmembrane segments spans residues 2–22, 25–45, 61–81, 91–110, 114–133, 149–169, 189–209, 223–243, 264–284, 292–312, 317–337, 362–382, 395–415, and 434–454; these read NTLI…ILNF, GIVP…FYEF, FSTA…ALSH, ISDF…AMVS, LAMF…VLAA, FLMG…IYGA, IWFP…IAAV, PALT…ATLF, FTNV…IMAL, MLAF…LTIA, VLLY…SVIL, AAIL…SGFF, GYVA…GYYF, and PFLI…LGLF.

The protein belongs to the complex I subunit 2 family. As to quaternary structure, NDH-1 is composed of 14 different subunits. Subunits NuoA, H, J, K, L, M, N constitute the membrane sector of the complex.

The protein localises to the cell inner membrane. It carries out the reaction a quinone + NADH + 5 H(+)(in) = a quinol + NAD(+) + 4 H(+)(out). Functionally, NDH-1 shuttles electrons from NADH, via FMN and iron-sulfur (Fe-S) centers, to quinones in the respiratory chain. The immediate electron acceptor for the enzyme in this species is believed to be a menaquinone. Couples the redox reaction to proton translocation (for every two electrons transferred, four hydrogen ions are translocated across the cytoplasmic membrane), and thus conserves the redox energy in a proton gradient. In Flavobacterium johnsoniae (strain ATCC 17061 / DSM 2064 / JCM 8514 / BCRC 14874 / CCUG 350202 / NBRC 14942 / NCIMB 11054 / UW101) (Cytophaga johnsonae), this protein is NADH-quinone oxidoreductase subunit N.